Consider the following 199-residue polypeptide: Pyridoxine/pyridoxamine 5'-phosphate oxidase (199 aa).

Residues 44–49 (RTVLLK), 59–60 (YT), lysine 66, and glutamine 91 each bind FMN. Position 49 (lysine 49) interacts with substrate. Positions 109, 113, and 117 each coordinate substrate. Residues 126–127 (QS) and tryptophan 171 contribute to the FMN site. 177–179 (RLH) lines the substrate pocket. Arginine 181 is an FMN binding site.

This sequence belongs to the pyridoxamine 5'-phosphate oxidase family. Homodimer. The cofactor is FMN.

It carries out the reaction pyridoxamine 5'-phosphate + O2 + H2O = pyridoxal 5'-phosphate + H2O2 + NH4(+). It catalyses the reaction pyridoxine 5'-phosphate + O2 = pyridoxal 5'-phosphate + H2O2. It functions in the pathway cofactor metabolism; pyridoxal 5'-phosphate salvage; pyridoxal 5'-phosphate from pyridoxamine 5'-phosphate: step 1/1. Its pathway is cofactor metabolism; pyridoxal 5'-phosphate salvage; pyridoxal 5'-phosphate from pyridoxine 5'-phosphate: step 1/1. Its function is as follows. Catalyzes the oxidation of either pyridoxine 5'-phosphate (PNP) or pyridoxamine 5'-phosphate (PMP) into pyridoxal 5'-phosphate (PLP). This Xanthomonas campestris pv. campestris (strain 8004) protein is Pyridoxine/pyridoxamine 5'-phosphate oxidase.